The primary structure comprises 236 residues: 2-C-methyl-D-erythritol 4-phosphate cytidylyltransferase (236 aa).

It belongs to the IspD/TarI cytidylyltransferase family. IspD subfamily. In terms of assembly, homodimer.

It carries out the reaction 2-C-methyl-D-erythritol 4-phosphate + CTP + H(+) = 4-CDP-2-C-methyl-D-erythritol + diphosphate. It participates in isoprenoid biosynthesis; isopentenyl diphosphate biosynthesis via DXP pathway; isopentenyl diphosphate from 1-deoxy-D-xylulose 5-phosphate: step 2/6. Catalyzes the formation of 4-diphosphocytidyl-2-C-methyl-D-erythritol from CTP and 2-C-methyl-D-erythritol 4-phosphate (MEP). The sequence is that of 2-C-methyl-D-erythritol 4-phosphate cytidylyltransferase from Enterobacter sp. (strain 638).